Consider the following 328-residue polypeptide: Ethanol acetyltransferase 1 (328 aa).

The region spanning 39–309 (PAIINIHGLL…TGHNLLLENP (271 aa)) is the AB hydrolase-1 domain. Residues Ser-115, Asp-139, and His-302 each act as charge relay system in the active site.

Belongs to the AB hydrolase superfamily.

The protein localises to the mitochondrion. It carries out the reaction ethanol + acetyl-CoA = ethyl acetate + CoA. The enzyme catalyses acetyl-CoA + H2O = acetate + CoA + H(+). It catalyses the reaction ethyl acetate + H2O = ethanol + acetate + H(+). Its function is as follows. Alcohol acetyltransferase that catalyzes the synthesis of ethyl acetate from ethanol and acetyl-CoA. Can also function as a thioesterase by hydrolyzing acetyl-CoA in the absence of ethanol, as well as esterase hydrolyzing ethyl acetate. The chain is Ethanol acetyltransferase 1 from Saccharomyces cerevisiae (strain ATCC 204508 / S288c) (Baker's yeast).